We begin with the raw amino-acid sequence, 462 residues long: Keratin, type I cytoskeletal 28 (462 aa).

Residues 1–26 (MSLRFSGGSRHVGIQSGSLRPPSGGA) are disordered. A head region spans residues 1–83 (MSLRFSGGSR…GSEGGLLSGN (83 aa)). Positions 84 to 119 (EKVTMQNLNNRLASYLDNVKALEEANSELERKIKTW) are coil 1A. The region spanning 84–399 (EKVTMQNLNN…RLIDGDENSC (316 aa)) is the IF rod domain. Residues 120-141 (HEKYGPGSCRGLDRDYSKYHLT) are linker 1. Positions 142-233 (IEDLKSKIIS…KNHEEEMKVL (92 aa)) are coil 1B. The tract at residues 234–256 (QCAAGGNVNVEMNAAPGVDLTVL) is linker 12. A coil 2 region spans residues 257 to 395 (LNNMRAEYEA…ETYCRLIDGD (139 aa)). The tract at residues 396 to 462 (ENSCSVSKGF…NGKAEQRVPF (67 aa)) is tail.

Belongs to the intermediate filament family. Heterotetramer of two type I and two type II keratins. In terms of tissue distribution, in the hair follicle and bulb, uniformly expressed in all three layers of the inner root sheath (the Henle layer, the Huxley layer and the cuticle) and observed in matrix cells (at protein level).

The protein resides in the cytoplasm. Its function is as follows. Essential for the proper assembly of types I and II keratin protein complexes and the formation of keratin intermediate filaments in the inner root sheath (irs). In Mus musculus (Mouse), this protein is Keratin, type I cytoskeletal 28.